A 295-amino-acid chain; its full sequence is Histamine N-methyltransferase (295 aa).

Glu-28 serves as a coordination point for substrate. S-adenosyl-L-methionine contacts are provided by Gly-60, Glu-89, Gln-94, Ser-120, and Ile-143. Substrate is bound at residue Asn-284.

It belongs to the class I-like SAM-binding methyltransferase superfamily. HNMT family. As to quaternary structure, monomer.

It is found in the cytoplasm. It catalyses the reaction histamine + S-adenosyl-L-methionine = N(tau)-methylhistamine + S-adenosyl-L-homocysteine + H(+). Its function is as follows. Inactivates histamine by N-methylation. Plays an important role in degrading histamine and in regulating the airway response to histamine. The protein is Histamine N-methyltransferase (Hnmt) of Mus musculus (Mouse).